Consider the following 174-residue polypeptide: RxLR effector protein 207 (174 aa).

The signal sequence occupies residues 1-20 (MSKVFLLLVLSVFALVSCDA). Residues 46-62 (RMLRAQEEPTNAADEER) carry the RxLR-dEER motif. Positions 82–99 (VTNSKLVQSMNNKLASLT) are disordered.

This sequence belongs to the RxLR effector family. As to quaternary structure, interacts with Nicotiana benthamiana ACD11, BPA1 (binding partner of ACD11), as well as BPA-like proteins BPL1, BPL2, BPL3 and BPL4.

The protein localises to the secreted. It localises to the host cell membrane. Secreted effector that activates ROS-mediated cell death in plant host and is essential for virulence. Plays a role in the transition from the biotrophic to necrotrophic stage. Associates with and promotes the degradation of Nicotiana benthamiana BPA1, BPL1, BPL2, and BPL4 to disrupt ACD11 stabilization in a 26S proteasome-dependent manner. The polypeptide is RxLR effector protein 207 (Phytophthora capsici).